The following is a 413-amino-acid chain: Zinc finger protein 821 (413 aa).

The interval 26 to 83 (RQAMMKTDFPGDLGSQRQAIQQLRDQDSSSSDSEGDEEETTQDEVSSHTSEEDGGVVK) is disordered. Acidic residues predominate over residues 58–67 (SEGDEEETTQ). C2H2-type zinc fingers lie at residues 117-141 (QLCQ…VYQH) and 151-173 (YMCP…LLIH). Residues 260–367 (ALRRQNEPLE…EKMDMMLRAQ (108 aa)) are a coiled coil. A disordered region spans residues 279 to 320 (RTAKKSRRDNETPEEREVRRMRDREAKRLQRMQETDEQRARR).

The protein belongs to the krueppel C2H2-type zinc-finger protein family.

The protein resides in the nucleus. May be involved in transcriptional regulation. The chain is Zinc finger protein 821 (Znf821) from Mus musculus (Mouse).